The sequence spans 155 residues: Large ribosomal subunit protein uL30 (155 aa).

The protein belongs to the universal ribosomal protein uL30 family. As to quaternary structure, part of the 50S ribosomal subunit.

The polypeptide is Large ribosomal subunit protein uL30 (Cenarchaeum symbiosum (strain A)).